A 334-amino-acid polypeptide reads, in one-letter code: MTTVYYDQDVKTDALQGKKIAVVGYGSQGHAHAQNLKDNGYDVVIGIRPGRSFDKAKEDGFDVFPVAEAVKQADVIMVLLPDEIQGDVYKNEIEPNLEKHNALAFAHGFNIHFGVIQPPADVDVFLVAPKGPGHLVRRTFVEGSAVPSLFGIQQGASGQARNIALSYAKGIGATRAGVIETTFKEETETDLFGEQAVLCGGVSKLIQSGFETLVEAGYQPELAYFEVLHEMKLIVDLMYEGGMENVRYSISNTAEFGDYVSGPRVITPDVKENMKAVLTDIQNGNFSNRFIEDNKNGFKEFYKLREEQHGHQIEKVGRELREMMPFIKSKSIEK.

Residues 1–181 (MTTVYYDQDV…GATRAGVIET (181 aa)) enclose the KARI N-terminal Rossmann domain. Residues 25-28 (YGSQ), arginine 48, serine 52, and 82-85 (DEIQ) each bind NADP(+). Histidine 107 is a catalytic residue. Residue glycine 133 coordinates NADP(+). The region spanning 182 to 327 (TFKEETETDL…RELREMMPFI (146 aa)) is the KARI C-terminal knotted domain. Residues aspartate 190, glutamate 194, glutamate 226, and glutamate 230 each coordinate Mg(2+). Serine 251 contributes to the substrate binding site.

The protein belongs to the ketol-acid reductoisomerase family. It depends on Mg(2+) as a cofactor.

It catalyses the reaction (2R)-2,3-dihydroxy-3-methylbutanoate + NADP(+) = (2S)-2-acetolactate + NADPH + H(+). The catalysed reaction is (2R,3R)-2,3-dihydroxy-3-methylpentanoate + NADP(+) = (S)-2-ethyl-2-hydroxy-3-oxobutanoate + NADPH + H(+). Its pathway is amino-acid biosynthesis; L-isoleucine biosynthesis; L-isoleucine from 2-oxobutanoate: step 2/4. It participates in amino-acid biosynthesis; L-valine biosynthesis; L-valine from pyruvate: step 2/4. In terms of biological role, involved in the biosynthesis of branched-chain amino acids (BCAA). Catalyzes an alkyl-migration followed by a ketol-acid reduction of (S)-2-acetolactate (S2AL) to yield (R)-2,3-dihydroxy-isovalerate. In the isomerase reaction, S2AL is rearranged via a Mg-dependent methyl migration to produce 3-hydroxy-3-methyl-2-ketobutyrate (HMKB). In the reductase reaction, this 2-ketoacid undergoes a metal-dependent reduction by NADPH to yield (R)-2,3-dihydroxy-isovalerate. The polypeptide is Ketol-acid reductoisomerase (NADP(+)) (Staphylococcus aureus (strain USA300)).